The sequence spans 161 residues: Nucleotide-binding protein XCV3791 (161 aa).

This sequence belongs to the YajQ family.

Functionally, nucleotide-binding protein. This Xanthomonas euvesicatoria pv. vesicatoria (strain 85-10) (Xanthomonas campestris pv. vesicatoria) protein is Nucleotide-binding protein XCV3791.